The primary structure comprises 931 residues: Valine--tRNA ligase (931 aa).

The short motif at 43–53 is the 'HIGH' region element; the sequence is PNVTGALHIGH. The disordered stretch occupies residues 351–370; the sequence is IPHTDKDGNAHDAEPRTIQT. Residues 353–365 show a composition bias toward basic and acidic residues; sequence HTDKDGNAHDAEP. A 'KMSKS' region motif is present at residues 552 to 556; it reads KMSKS. Lys-555 contributes to the ATP binding site. The tract at residues 691 to 717 is disordered; it reads LQGRGLGEGDEAVPAPADGPLSPALSP. The stretch at 864–930 forms a coiled coil; sequence VIDIAAERER…DRLSAALARL (67 aa).

The protein belongs to the class-I aminoacyl-tRNA synthetase family. ValS type 1 subfamily. In terms of assembly, monomer.

It localises to the cytoplasm. The catalysed reaction is tRNA(Val) + L-valine + ATP = L-valyl-tRNA(Val) + AMP + diphosphate. Catalyzes the attachment of valine to tRNA(Val). As ValRS can inadvertently accommodate and process structurally similar amino acids such as threonine, to avoid such errors, it has a 'posttransfer' editing activity that hydrolyzes mischarged Thr-tRNA(Val) in a tRNA-dependent manner. This chain is Valine--tRNA ligase, found in Sphingopyxis alaskensis (strain DSM 13593 / LMG 18877 / RB2256) (Sphingomonas alaskensis).